Consider the following 490-residue polypeptide: Flap endonuclease 1 (490 aa).

Positions 1–106 are N-domain; sequence MGIKGLTKFL…DELTKRDERR (106 aa). Mg(2+) is bound at residue D34. DNA is bound by residues R47 and R72. Mg(2+) is bound by residues D88, E160, E162, D181, and D183. The I-domain stretch occupies residues 124–266; that stretch reads LIKKQSVRTI…STAYKLLKKY (143 aa). E160 lines the DNA pocket. G244 and D246 together coordinate DNA. D246 provides a ligand contact to Mg(2+). Positions 351 to 359 are interaction with PCNA; sequence SQTCLDGFF. Disordered regions lie at residues 364–396 and 421–490; these read NERKNTHETPSRPPLSEKQKSETRKEVDSSLSC and SSQA…SDED. The span at 430–442 shows a compositional bias: polar residues; that stretch reads ENSSEAPNQSSEI. The span at 443 to 454 shows a compositional bias: basic and acidic residues; the sequence is KVNKIEENKDSE. Polar residues predominate over residues 455 to 469; the sequence is SSTVENTPSLQTKSP.

The protein belongs to the XPG/RAD2 endonuclease family. FEN1 subfamily. Interacts with PCNA. Three molecules of FEN1 bind to one PCNA trimer with each molecule binding to one PCNA monomer. PCNA stimulates the nuclease activity without altering cleavage specificity. The cofactor is Mg(2+). In terms of processing, phosphorylated. Phosphorylation upon DNA damage induces relocalization to the nuclear plasma.

It localises to the nucleus. The protein localises to the nucleolus. It is found in the nucleoplasm. Its subcellular location is the mitochondrion. Its function is as follows. Structure-specific nuclease with 5'-flap endonuclease and 5'-3' exonuclease activities involved in DNA replication and repair. During DNA replication, cleaves the 5'-overhanging flap structure that is generated by displacement synthesis when DNA polymerase encounters the 5'-end of a downstream Okazaki fragment. It enters the flap from the 5'-end and then tracks to cleave the flap base, leaving a nick for ligation. Also involved in the long patch base excision repair (LP-BER) pathway, by cleaving within the apurinic/apyrimidinic (AP) site-terminated flap. Acts as a genome stabilization factor that prevents flaps from equilibrating into structures that lead to duplications and deletions. Also possesses 5'-3' exonuclease activity on nicked or gapped double-stranded DNA, and exhibits RNase H activity. Also involved in replication and repair of rDNA and in repairing mitochondrial DNA. The chain is Flap endonuclease 1 from Cryptosporidium parvum (strain Iowa II).